Consider the following 795-residue polypeptide: Cyclin-dependent kinase 11B (795 aa).

Residues 17 to 60 (LQEKKRRKEQEEKAEIKRLKNSDDRDSKRDSLEEGELRDHRMEI) are compositionally biased toward basic and acidic residues. The segment at 17–412 (LQEKKRRKEQ…EGDYVPDSPA (396 aa)) is disordered. 2 positions are modified to phosphoserine: Ser47 and Ser72. Residues 95–113 (EKAHHRKDEKRKEKRRHRS) are compositionally biased toward basic residues. 4 stretches are compositionally biased toward basic and acidic residues: residues 114–131 (HSAE…EREH), 138–227 (REEQ…DKVK), 238–253 (PPRE…KPGE), and 264–276 (QLKE…RDLL). At Ser115 the chain carries Phosphoserine. Ser283 is modified (phosphoserine). Positions 291–302 (SAESSSAESGSG) are enriched in low complexity. Acidic residues-rich tracts occupy residues 303–364 (SEEE…EERE) and 383–392 (ESEEAEEEVG). The 286-residue stretch at 438–723 (FQCLNRIEEG…AEDGLKHEYF (286 aa)) folds into the Protein kinase domain. ATP-binding positions include 444–452 (IEEGTYGVV) and Lys467. Residue Ser482 is modified to Phosphoserine; by CDK7. Thr488 carries the post-translational modification Phosphothreonine; by CDK7. Asp562 serves as the catalytic Proton acceptor. At Ser589 the chain carries Phosphoserine. Tyr594 carries the phosphotyrosine modification. Thr595 is subject to Phosphothreonine. Lys641 participates in a covalent cross-link: Glycyl lysine isopeptide (Lys-Gly) (interchain with G-Cter in SUMO2). A disordered region spans residues 733–795 (SMFPTWPAKS…AAGPGFSLKF (63 aa)). Thr751 carries the post-translational modification Phosphothreonine. Position 752 is a phosphoserine (Ser752).

This sequence belongs to the protein kinase superfamily. CMGC Ser/Thr protein kinase family. CDC2/CDKX subfamily. In terms of assembly, cleaved isoform SV9 (p110C) binds to the serine/threonine kinase PAK1 and RANBP9. p110C interacts with RNPS1. Isoform 7, but not isoform SV9, nor its cleavage product p110C, interacts with CCND3. Interacts with CCNL1 and CCNL2. Forms complexes with pre-mRNA-splicing factors, including at least SRSF1, SRSF2 and SRSF7/SLU7. Interacts with isoform 5 of MYO18A. As to quaternary structure, (Microbial infection) Interacts with human herpes virus 1 (HHV-1) transcriptional regulator ICP22. It depends on Mg(2+) as a cofactor. In terms of processing, during FAS- or TNF-induced apoptosis, isoform SV9 is cleaved by caspases to produce p110C, a fragment that contains the C-terminal kinase domain. Phosphorylation at Ser-115 creates a binding site for 14-3-3 proteins. p110C can be autophosphorylated. Expressed ubiquitously. Some evidence of isoform-specific tissue distribution.

It is found in the cytoplasm. Its subcellular location is the nucleus. The enzyme catalyses L-seryl-[protein] + ATP = O-phospho-L-seryl-[protein] + ADP + H(+). The catalysed reaction is L-threonyl-[protein] + ATP = O-phospho-L-threonyl-[protein] + ADP + H(+). Its activity is regulated as follows. Phosphorylation at Thr-448 or Tyr-449 inactivates the enzyme, while phosphorylation at Thr-595 activates it. Functionally, plays multiple roles in cell cycle progression, cytokinesis and apoptosis. Involved in pre-mRNA splicing in a kinase activity-dependent manner. Isoform 7 may act as a negative regulator of normal cell cycle progression. The polypeptide is Cyclin-dependent kinase 11B (CDK11B) (Homo sapiens (Human)).